The sequence spans 421 residues: Fasciclin-like arabinogalactan protein ARB_02922 (421 aa).

Residues 1–17 form the signal peptide; sequence MLLYYILVALWATVTYA. FAS1 domains are found at residues 18 to 167 and 169 to 296; these read KSFS…DRPL and LPQS…SDVL. Residues Asn52, Asn75, Asn80, Asn120, Asn145, Asn181, Asn223, and Asn300 are each glycosylated (N-linked (GlcNAc...) asparagine). The segment at 300-401 is disordered; the sequence is NDTAKPVPNA…NTPQPGAAAT (102 aa). 2 stretches are compositionally biased toward gly residues: residues 344 to 356 and 372 to 387; these read TSGG…GGGE and SGGG…GGPG. The span at 388-401 shows a compositional bias: low complexity; the sequence is PTATNTPQPGAAAT. A lipid anchor (GPI-anchor amidated glycine) is attached at Gly397. A propeptide spans 398 to 421 (removed in mature form); the sequence is AAATERAKAGLAAVVGLGVVLINA.

This sequence belongs to the fasciclin-like AGP family.

The protein resides in the cell membrane. In terms of biological role, may be a cell surface adhesion protein. In Arthroderma benhamiae (strain ATCC MYA-4681 / CBS 112371) (Trichophyton mentagrophytes), this protein is Fasciclin-like arabinogalactan protein ARB_02922.